We begin with the raw amino-acid sequence, 202 residues long: Dephospho-CoA kinase (202 aa).

The region spanning 4-202 (FLGLTGGIAT…EGVCHKSGMS (199 aa)) is the DPCK domain. 12–17 (ATGKTT) is an ATP binding site.

The protein belongs to the CoaE family.

Its subcellular location is the cytoplasm. The catalysed reaction is 3'-dephospho-CoA + ATP = ADP + CoA + H(+). It participates in cofactor biosynthesis; coenzyme A biosynthesis; CoA from (R)-pantothenate: step 5/5. Its function is as follows. Catalyzes the phosphorylation of the 3'-hydroxyl group of dephosphocoenzyme A to form coenzyme A. The protein is Dephospho-CoA kinase of Latilactobacillus sakei subsp. sakei (strain 23K) (Lactobacillus sakei subsp. sakei).